The chain runs to 268 residues: Cytochrome b-c1 complex subunit Rieske-3, mitochondrial (268 aa).

A mitochondrion-targeting transit peptide spans 1–56 (MLRIAGRKLSSSAATRSSSAFFTRNPFTFTDDSSSPARSPSPASLASQFLDQFRGF). Residues 57-105 (SSNSVSPAHQTGLVSDLPATVAAIKNPSSKIVYDDSNHERYPPGDPSKR) are Mitochondrial matrix-facing. Residues 106-128 (AFAYFVLTGGRFVYASLVRLLIL) traverse the membrane as a helical segment. The Mitochondrial intermembrane portion of the chain corresponds to 129–268 (KFVLSMSASK…FMEENKLLIG (140 aa)). In terms of domain architecture, Rieske spans 178-266 (INLANSVDLG…YSFMEENKLL (89 aa)). Residues cysteine 211, histidine 213, cysteine 230, and histidine 233 each coordinate [2Fe-2S] cluster. The cysteines at positions 216 and 232 are disulfide-linked.

This sequence belongs to the Rieske iron-sulfur protein family. In terms of assembly, component of the ubiquinol-cytochrome c oxidoreductase (cytochrome b-c1 complex, complex III, CIII), a multisubunit enzyme composed of 3 respiratory subunits cytochrome b, cytochrome c1 and Rieske protein, 2 core protein subunits, and several low-molecular weight protein subunits. The complex exists as an obligatory dimer and forms supercomplexes (SCs) in the inner mitochondrial membrane with cytochrome c oxidase (complex IV, CIV). The cofactor is [2Fe-2S] cluster. In terms of tissue distribution, high levels are seen in the flowers while a low level expression is seen in the roots, leaves and stems.

It localises to the mitochondrion inner membrane. It catalyses the reaction a quinol + 2 Fe(III)-[cytochrome c](out) = a quinone + 2 Fe(II)-[cytochrome c](out) + 2 H(+)(out). Its function is as follows. Component of the ubiquinol-cytochrome c oxidoreductase, a multisubunit transmembrane complex that is part of the mitochondrial electron transport chain which drives oxidative phosphorylation. The respiratory chain contains 3 multisubunit complexes succinate dehydrogenase (complex II, CII), ubiquinol-cytochrome c oxidoreductase (cytochrome b-c1 complex, complex III, CIII) and cytochrome c oxidase (complex IV, CIV), that cooperate to transfer electrons derived from NADH and succinate to molecular oxygen, creating an electrochemical gradient over the inner membrane that drives transmembrane transport and the ATP synthase. The cytochrome b-c1 complex catalyzes electron transfer from ubiquinol to cytochrome c, linking this redox reaction to translocation of protons across the mitochondrial inner membrane, with protons being carried across the membrane as hydrogens on the quinol. In the process called Q cycle, 2 protons are consumed from the matrix, 4 protons are released into the intermembrane space and 2 electrons are passed to cytochrome c. The Rieske protein is a catalytic core subunit containing a [2Fe-2S] iron-sulfur cluster. It cycles between 2 conformational states during catalysis to transfer electrons from the quinol bound in the Q(0) site in cytochrome b to cytochrome c1. The protein is Cytochrome b-c1 complex subunit Rieske-3, mitochondrial of Nicotiana tabacum (Common tobacco).